A 350-amino-acid chain; its full sequence is Probable V-type proton ATPase subunit d 2 (350 aa).

The protein belongs to the V-ATPase V0D/AC39 subunit family. V-ATPase is a heteromultimeric enzyme made up of two complexes: the ATP-hydrolytic V1 complex and the proton translocation V0 complex. The V1 complex consists of three catalytic AB heterodimers that form a heterohexamer, three peripheral stalks each consisting of EG heterodimers, one central rotor including subunits D and F, and the regulatory subunits C and H. The proton translocation complex V0 consists of the proton transport subunit a, a ring of proteolipid subunits c9c'', rotary subunit d, subunits e and f, and the accessory subunits VhaAC45 and ATP6AP2.

Functionally, subunit of the V0 complex of vacuolar(H+)-ATPase (V-ATPase), a multisubunit enzyme composed of a peripheral complex (V1) that hydrolyzes ATP and a membrane integral complex (V0) that translocates protons. V-ATPase is responsible for acidifying and maintaining the pH of intracellular compartments and in some cell types, is targeted to the plasma membrane, where it is responsible for acidifying the extracellular environment. May play a role in coupling of proton transport and ATP hydrolysis. This chain is Probable V-type proton ATPase subunit d 2 (VhaAC39-2), found in Drosophila melanogaster (Fruit fly).